The chain runs to 222 residues: Kinetochore protein Spc25 (222 aa).

The stretch at Arg51–Ala86 forms a coiled coil.

It belongs to the SPC25 family. As to quaternary structure, component of the Ndc80 complex, which is composed of Ndc80, Nuf2 and Spc25.

The protein resides in the nucleus. The protein localises to the chromosome. Its subcellular location is the centromere. It is found in the kinetochore. Acts as a component of the essential kinetochore-associated Ndc80 complex, which is required for chromosome segregation and spindle checkpoint activity during meiosis and mitosis. Required for kinetochore integrity and the organization of stable microtubule binding sites in the outer plate of the kinetochore. Participates in SAC signaling that responds specifically to disruptions in spindle microtubule dynamics. The NDC80 complex synergistically enhances the affinity of the SKA1 complex for microtubules and may allow the NDC80 complex to track depolymerizing microtubules. This chain is Kinetochore protein Spc25, found in Drosophila mauritiana (Fruit fly).